Reading from the N-terminus, the 421-residue chain is Forkhead box protein J1 (421 aa).

2 disordered regions span residues 1–34 (MAES…DSLT) and 48–116 (KAPA…DYAT). Residues 66-80 (PGSAAPGSPLAADPA) show a composition bias toward low complexity. Positions 90-99 (KPTSSCTSRS) are enriched in polar residues. The fork-head DNA-binding region spans 120-210 (VKPPYSYATL…YAERLLSGAF (91 aa)). The tract at residues 261–302 (AGWGAGEGRLGHKRKQPLPKRVAKVPRPPSTLLPTPEEQGEL) is disordered. A compositionally biased stretch (basic residues) spans 271-284 (GHKRKQPLPKRVAK).

Belongs to the FOXJ1 family. As to expression, testis, oviduct, lung and brain cortex.

The protein resides in the nucleus. Its function is as follows. Transcription factor specifically required for the formation of motile cilia. Acts by activating transcription of genes that mediate assembly of motile cilia, such as CFAP157. Binds the DNA consensus sequences 5'-HWDTGTTTGTTTA-3' or 5'-KTTTGTTGTTKTW-3' (where H is not G, W is A or T, D is not C, and K is G or T). Activates the transcription of a variety of ciliary proteins in the developing brain and lung. This is Forkhead box protein J1 from Homo sapiens (Human).